The sequence spans 264 residues: S-adenosylmethionine decarboxylase proenzyme (264 aa).

The active-site Schiff-base intermediate with substrate; via pyruvic acid is Ser112. Ser112 carries the post-translational modification Pyruvic acid (Ser); by autocatalysis. His117 functions as the Proton acceptor; for processing activity in the catalytic mechanism. Cys140 serves as the catalytic Proton donor; for catalytic activity.

This sequence belongs to the prokaryotic AdoMetDC family. Type 2 subfamily. As to quaternary structure, heterooctamer of four alpha and four beta chains arranged as a tetramer of alpha/beta heterodimers. Requires pyruvate as cofactor. In terms of processing, is synthesized initially as an inactive proenzyme. Formation of the active enzyme involves a self-maturation process in which the active site pyruvoyl group is generated from an internal serine residue via an autocatalytic post-translational modification. Two non-identical subunits are generated from the proenzyme in this reaction, and the pyruvate is formed at the N-terminus of the alpha chain, which is derived from the carboxyl end of the proenzyme. The post-translation cleavage follows an unusual pathway, termed non-hydrolytic serinolysis, in which the side chain hydroxyl group of the serine supplies its oxygen atom to form the C-terminus of the beta chain, while the remainder of the serine residue undergoes an oxidative deamination to produce ammonia and the pyruvoyl group blocking the N-terminus of the alpha chain.

It catalyses the reaction S-adenosyl-L-methionine + H(+) = S-adenosyl 3-(methylsulfanyl)propylamine + CO2. Its pathway is amine and polyamine biosynthesis; S-adenosylmethioninamine biosynthesis; S-adenosylmethioninamine from S-adenosyl-L-methionine: step 1/1. Its function is as follows. Catalyzes the decarboxylation of S-adenosylmethionine to S-adenosylmethioninamine (dcAdoMet), the propylamine donor required for the synthesis of the polyamines spermine and spermidine from the diamine putrescine. This Hamiltonella defensa subsp. Acyrthosiphon pisum (strain 5AT) protein is S-adenosylmethionine decarboxylase proenzyme.